A 1114-amino-acid chain; its full sequence is OTU domain-containing protein 4 (1114 aa).

At Met1 the chain carries N-acetylmethionine. The segment at 1-22 is disordered; it reads MEAAVGVPDGGDQGGAGPREDA. Gly residues predominate over residues 8–17; it reads PDGGDQGGAG. Residues 34–155 form the OTU domain; that stretch reads LYRKLVAKDG…GNHYDIVYPI (122 aa). Residues 39 to 45 form a cys-loop region; the sequence is VAKDGSC. Asp42 is a catalytic residue. The Nucleophile role is filled by Cys45. The variable-loop stretch occupies residues 94 to 104; the sequence is LENPQEWVGQV. Tyr120 carries the phosphotyrosine modification. Phosphoserine occurs at positions 126 and 128. A Phosphothreonine modification is found at Thr131. The interval 143–148 is his-loop; the sequence is FSNGNH. His148 is a catalytic residue. A phosphoserine mark is found at Ser166, Ser199, Ser202, Ser204, and Ser341. The tract at residues 323–449 is disordered; that stretch reads KHTSKNLKAP…FGLSPEERRE (127 aa). Low complexity predominate over residues 392-404; it reads FSSHSSGSQSQKF. Positions 420–435 are enriched in basic and acidic residues; sequence RKPDRERVEDFDHTSR. Residue Tyr439 is modified to Phosphotyrosine. Ser443 is subject to Phosphoserine. Phosphotyrosine is present on Tyr460. Positions 472–567 are disordered; it reads ALSSSSVNQS…PAEQKPAEHV (96 aa). Over residues 474–487 the composition is skewed to low complexity; the sequence is SSSSVNQSASQSSN. The segment covering 496-529 has biased composition (basic and acidic residues); that stretch reads HVGDRKGSRRRMDTEERKDKDSIHGHSQLDKRPE. 3 positions are modified to phosphoserine: Ser546, Ser893, and Ser900. The segment at 911–1114 is disordered; it reads EFPEARGEHV…MGDGHRGQHT (204 aa). Composition is skewed to basic and acidic residues over residues 913-922 and 969-1000; these read PEARGEHVHS and NRER…DPKT. Residues Ser1006, Ser1011, Ser1014, Ser1023, and Ser1024 each carry the phosphoserine modification. Positions 1039 to 1048 are enriched in polar residues; the sequence is SKQFYNQTYG. Residue Ser1049 is modified to Phosphoserine. 2 stretches are compositionally biased toward basic and acidic residues: residues 1067-1086 and 1096-1114; these read VRSE…EGYQ and FRGD…GQHT.

In terms of assembly, interacts with MYD88; the interaction is direct. Interacts with ALKBH3; the interaction is direct. Interacts with USP7; the interaction is direct. Interacts with USP9X; the interaction is direct. Post-translationally, phosphorylated on Ser-202 and Ser-204 likely by CSNK2A1-CSNK2A2 serine/threonine-protein kinase complex. Activates 'Lys-63'-specific deubiquitinase activity.

It is found in the cytoplasm. Its subcellular location is the nucleus. The catalysed reaction is Thiol-dependent hydrolysis of ester, thioester, amide, peptide and isopeptide bonds formed by the C-terminal Gly of ubiquitin (a 76-residue protein attached to proteins as an intracellular targeting signal).. With respect to regulation, phosphorylation on Ser-202 and Ser-204 induces 'Lys-63'-specific deubiquitinase activity. Its function is as follows. Deubiquitinase which hydrolyzes the isopeptide bond between the ubiquitin C-terminus and the lysine epsilon-amino group of the target protein. May negatively regulate inflammatory and pathogen recognition signaling in innate immune response. Upon phosphorylation at Ser-202 and Ser-204 residues, via IL-1 receptor and Toll-like receptor signaling pathway, specifically deubiquitinates 'Lys-63'-polyubiquitinated MYD88 adapter protein triggering down-regulation of NF-kappa-B-dependent transcription of inflammatory mediators. Independently of the catalytic activity, acts as a scaffold for alternative deubiquitinases to assemble specific deubiquitinase-substrate complexes. Associates with USP7 and USP9X deubiquitinases to stabilize alkylation repair enzyme ALKBH3, thereby promoting the repair of alkylated DNA lesions. The polypeptide is OTU domain-containing protein 4 (Homo sapiens (Human)).